The primary structure comprises 759 residues: Protein transport protein sec23-1 (759 aa).

4 residues coordinate Zn(2+): Cys56, Cys60, Cys79, and Cys82.

It belongs to the SEC23/SEC24 family. SEC23 subfamily. In terms of assembly, the COPII coat is composed of at least 5 proteins: the sec23/24 complex, the sec13/31 complex, and the protein sar1.

The protein localises to the cytoplasm. Its subcellular location is the cytoplasmic vesicle. It is found in the COPII-coated vesicle membrane. The protein resides in the endoplasmic reticulum membrane. It localises to the golgi apparatus membrane. Its function is as follows. Component of the coat protein complex II (COPII) which promotes the formation of transport vesicles from the endoplasmic reticulum (ER). The coat has two main functions, the physical deformation of the endoplasmic reticulum membrane into vesicles and the selection of cargo molecules. The protein is Protein transport protein sec23-1 (sec231) of Schizosaccharomyces pombe (strain 972 / ATCC 24843) (Fission yeast).